Consider the following 994-residue polypeptide: Sarcoplasmic/endoplasmic reticulum calcium ATPase 1 (994 aa).

The Cytoplasmic portion of the chain corresponds to 1–48 (MEQAHTKTTEECLAYFGVNENTGLSLDQVKKNFDKFGPNELPAEEGKS). Residues 49 to 69 (LWELVAEQFEDLLVRILLLAA) traverse the membrane as a helical segment. At 70–89 (IISFVLAWFEEGEETVTAFV) the chain is on the lumenal side. Residues 90-110 (EPFVILLILIANAVVGVWQER) traverse the membrane as a helical segment. Over 111 to 253 (NAEDAIEALK…QEKTPLQQKL (143 aa)) the chain is Cytoplasmic. Residues 254–273 (DEFGEQLSKVISLICVAVWL) traverse the membrane as a helical segment. Residues 274–295 (INIGHFNDPIHGGSWIKGAIYY) lie on the Lumenal side of the membrane. Residues 296–313 (FKIAVALAVAAIPEGLPA) form a helical membrane-spanning segment. Residues Val304, Ala305, Ile307, and Glu309 each coordinate Ca(2+). Over 314–757 (VITTCLALGT…EEGRAIYNNM (444 aa)) the chain is Cytoplasmic. The 4-aspartylphosphate intermediate role is filled by Asp351. Residues Asp351 and Thr353 each contribute to the Mg(2+) site. The ATP site is built by Thr353, Glu442, Arg489, Lys515, Arg560, Thr625, Gly626, Asp627, Arg678, and Lys684. Residue Asp703 coordinates Mg(2+). Asn706 lines the ATP pocket. The helical transmembrane segment at 758-777 (KQFIRYLISSNVGEVVCIFL) threads the bilayer. The Ca(2+) site is built by Asn768 and Glu771. At 778 to 787 (TAALGLPEAL) the chain is on the lumenal side. A helical transmembrane segment spans residues 788–808 (IPVQLLWVNLVTDGLPATALG). The segment at 788-808 (IPVQLLWVNLVTDGLPATALG) is interaction with PLN. The Ca(2+) site is built by Asn796, Thr799, and Asp800. The Cytoplasmic segment spans residues 809-828 (FNPPDLDIMDRPPRSPKEPL). Residues 829–851 (ISGWLFFRYMAIGGYVGAATVGA) traverse the membrane as a helical segment. The Lumenal portion of the chain corresponds to 852 to 897 (AAWWFMYADDGPNVTFYQLSHFMQCTEDNPDFEGHECEIFESPVPM). Cys876 and Cys888 are joined by a disulfide. The helical transmembrane segment at 898–917 (TMALSVLVTIEMCNALNSLS) threads the bilayer. Position 908 (Glu908) interacts with Ca(2+). Over 918–930 (ENQSLIRMPPWSN) the chain is Cytoplasmic. Residues 931–949 (FWLLGSICLSMSLHFLILY) traverse the membrane as a helical segment. The tract at residues 932–943 (WLLGSICLSMSL) is interaction with PLN. The Lumenal portion of the chain corresponds to 950 to 964 (VEPLPMIFKLTPLNV). Residues 965 to 985 (EQWFIVLKMSFPVILLDELLK) traverse the membrane as a helical segment. Topologically, residues 986–994 (FVARNYLEG) are cytoplasmic.

It belongs to the cation transport ATPase (P-type) (TC 3.A.3) family. Type IIA subfamily. In terms of assembly, interacts with sarcolipin (SLN). Interacts with phospholamban (PLN). Interacts with myoregulin (MRLN). Interacts with DWORF. Interacts with VMP1. Mg(2+) serves as cofactor.

It localises to the endoplasmic reticulum membrane. It is found in the sarcoplasmic reticulum membrane. The catalysed reaction is Ca(2+)(in) + ATP + H2O = Ca(2+)(out) + ADP + phosphate + H(+). Inhibited by sarcolipin (SLN) and myoregulin (MRLN). Also shown to be inhibited by phospholamban (PLN) in vitro. Enhanced by DWORF; DWORF increases activity by displacing sarcolipin (SLN), phospholamban (PLN) and myoregulin (MRLN). In terms of biological role, key regulator of striated muscle performance by acting as the major Ca(2+) ATPase responsible for the reuptake of cytosolic Ca(2+) into the sarcoplasmic reticulum. Catalyzes the hydrolysis of ATP coupled with the translocation of calcium from the cytosol to the sarcoplasmic reticulum lumen. Contributes to calcium sequestration involved in muscular excitation/contraction. In Pelophylax lessonae (Pool frog), this protein is Sarcoplasmic/endoplasmic reticulum calcium ATPase 1 (ATP2A1).